The chain runs to 1004 residues: Centriolar coiled-coil protein of 110 kDa (1004 aa).

The segment at 1–221 (MEEYEEFCEK…SCLAEVTPDP (221 aa)) is CEP97 binding. Residues 51 to 90 (EKRKKIQEEKQKALDVQSRKQANRKKALLTRVQEILENVQ) adopt a coiled-coil conformation. The segment at 64-82 (LDVQSRKQANRKKALLTRV) is calmodulin-binding. The segment at 67–82 (QSRKQANRKKALLTRV) is required for interaction with CEP290. 2 disordered regions span residues 147-194 (PVNN…SSAS) and 239-279 (RELS…APPM). At Ser170 the chain carries Phosphoserine. The segment covering 243–252 (SRSLRNSLKR) has biased composition (low complexity). Residues 253 to 276 (SVNETHSDRENDAAKASDCVKEKA) are compositionally biased toward basic and acidic residues. The segment at 349-564 (ENKVKSLKGP…QTQTSRQQMD (216 aa)) is interaction with CEP76. A phosphoserine mark is found at Ser364, Ser370, and Ser398. A disordered region spans residues 401–433 (GKEEAVDRTAPAAAETTNESETVPKSPTDLTGV). A compositionally biased stretch (polar residues) spans 415 to 433 (ETTNESETVPKSPTDLTGV). Ser550 is modified (phosphoserine). The stretch at 641–699 (QELLKSKMLAFEEMRKRLEEQHAQQLSLLIAEQEREQEQLQKEIEEQEKMLKEKAVTTD) forms a coiled coil. Calmodulin-binding regions lie at residues 773–813 (GRAQ…DKLK) and 901–916 (VALSVATQKSLDRKKF). A disordered region spans residues 955-1004 (LSRQGTPKTSVKGVVQNRQKPSQSRVPNRAPVSGAYAGKTQRKRPNVATI). The segment covering 970-980 (QNRQKPSQSRV) has biased composition (polar residues). Residues 994–1004 (TQRKRPNVATI) are compositionally biased toward basic residues.

In terms of assembly, interacts with CALM1, CETN2, CEP76, CEP104, CEP290 and TALPID3. Interacts with CEP97. Seems to associate with discrete CETN2, CEP97 and CEP290-containing complexes. Interacts with NEURL4 and CCNF; these interactions are not mutually exclusive and both lead to CCP110 ubiquitination and proteasome-dependent degradation. Via its interaction with NEURL4, may indirectly interact with HERC2. Interacts with KIF24, leading to its recruitment to centrioles. Interacts with USP20 and USP33. Interacts with MPHOSPH9. Interacts (via N-terminal region) with ENKD1 (via central region); ENKD1 competes with CEP97 for binding to CCP110, destabilizing the interaction between CP110 and CEP97 which promotes the removal of CCP110 and CEP97 from the mother centriole and allows the initiation of ciliogenesis. Phosphorylated by CDKs. In terms of processing, ubiquitinated by the SCF(CCNF) during G2 phase, leading to its degradation by the proteasome and preventing centrosome reduplication. Deubiquitinated by USP33 in S and G2/M phase, leading to stabilize CCP110 during the period which centrioles duplicate and elongate. Ubiquitinated by the EDVP complex, leading to its degradation.

It is found in the cytoplasm. The protein localises to the cytoskeleton. Its subcellular location is the microtubule organizing center. It localises to the centrosome. The protein resides in the centriole. It is found in the cilium basal body. Necessary for centrosome duplication at different stages of procentriole formation. Acts as a key negative regulator of ciliogenesis in collaboration with CEP97 by capping the mother centriole thereby preventing cilia formation. Also involved in promoting ciliogenesis. May play a role in the assembly of the mother centriole subdistal appendages (SDA) thereby effecting the fusion of recycling endosomes to basal bodies during cilia formation. Required for correct spindle formation and has a role in regulating cytokinesis and genome stability via cooperation with CALM1 and CETN2. This Mus musculus (Mouse) protein is Centriolar coiled-coil protein of 110 kDa (Ccp110).